The sequence spans 172 residues: 3-hydroxydecanoyl-[acyl-carrier-protein] dehydratase (172 aa).

Histidine 71 is an active-site residue.

Belongs to the thioester dehydratase family. FabA subfamily. As to quaternary structure, homodimer.

The protein localises to the cytoplasm. It carries out the reaction a (3R)-hydroxyacyl-[ACP] = a (2E)-enoyl-[ACP] + H2O. It catalyses the reaction (3R)-hydroxydecanoyl-[ACP] = (2E)-decenoyl-[ACP] + H2O. The enzyme catalyses (2E)-decenoyl-[ACP] = (3Z)-decenoyl-[ACP]. The protein operates within lipid metabolism; fatty acid biosynthesis. Functionally, necessary for the introduction of cis unsaturation into fatty acids. Catalyzes the dehydration of (3R)-3-hydroxydecanoyl-ACP to E-(2)-decenoyl-ACP and then its isomerization to Z-(3)-decenoyl-ACP. Can catalyze the dehydratase reaction for beta-hydroxyacyl-ACPs with saturated chain lengths up to 16:0, being most active on intermediate chain length. This is 3-hydroxydecanoyl-[acyl-carrier-protein] dehydratase from Maricaulis maris (strain MCS10) (Caulobacter maris).